Here is a 232-residue protein sequence, read N- to C-terminus: MKYTIVPAPRNLHDYVLELLEEWQPDCLDCEYSHGSPSPPTLHDLFDVELETSHSPFVGLCDSCAEADTDSSASTEADSGFSPLSTPPVSPIPPHPTSPASISDDMLLCLEEMPTFDDEDEVRSAATTFERWENTFDPHVGPIFGCLRCAFYQEQDDNALCGLCYLKALAEEPASAGAEEEDDEVIFVSAKPGGRKRSAATPCEPDGVSKRPCVPEPEQTEPLDLSLKPRPN.

Residues 40–48 (PTLHDLFDV) are interaction with RB1 in competition with E2F1. Positions 69 to 84 (TDSSASTEADSGFSPL) are enriched in low complexity. Residues 69-97 (TDSSASTEADSGFSPLSTPPVSPIPPHPT) are disordered. Over residues 85 to 97 (STPPVSPIPPHPT) the composition is skewed to pro residues. Positions 107–111 (LLCLE) match the LXCXE motif, interaction with host RB1 motif. A zinc finger lies at 146–164 (CLRCAFYQEQDDNALCGLC). Positions 175–232 (SAGAEEEDDEVIFVSAKPGGRKRSAATPCEPDGVSKRPCVPEPEQTEPLDLSLKPRPN) are disordered. The PXDLS motif, CTBP-binding motif lies at 222 to 226 (PLDLS). The short motif at 228 to 232 (KPRPN) is the Nuclear localization signal element.

The protein belongs to the adenoviridae E1A protein family. As to quaternary structure, interacts with host UBE2I; this interaction interferes with polySUMOylation. Interacts with host RB1; this interaction induces the aberrant dissociation of RB1-E2F1 complex thereby disrupting the activity of RB1 and activating E2F1-regulated genes. Interacts with host ATF7; the interaction enhances ATF7-mediated viral transactivation activity which requires the zinc binding domains of both proteins. Isoform early E1A 32 kDa protein and isoform early E1A 26 kDa protein interact (via N-terminus) with CUL1 and E3 ubiquitin ligase RBX1; these interactions inhibit RBX1-CUL1-dependent elongation reaction of ubiquitin chains and attenuate ubiquitination of SCF(FBXW7) target proteins. Interacts (via PXLXP motif) with host ZMYND11/BS69 (via MYND-type zinc finger); this interaction inhibits E1A mediated transactivation. Interacts with host EP300; this interaction stimulates the acetylation of RB1 by recruiting EP300 and RB1 into a multimeric-protein complex. Interacts with host CTBP1 and CTBP2; this interaction seems to potentiate viral replication. Interacts with host DCAF7. Interacts with host DYRK1A. Interacts with host KPNA4; this interaction allows E1A import into the host nucleus. Interacts with host EP400; this interaction stabilizes MYC. Interacts with host TBP protein; this interaction probably disrupts the TBP-TATA complex.

The protein localises to the host nucleus. In terms of biological role, plays a role in viral genome replication by driving entry of quiescent cells into the cell cycle. Stimulation of progression from G1 to S phase allows the virus to efficiently use the cellular DNA replicating machinery to achieve viral genome replication. E1A protein has both transforming and trans-activating activities. Induces the disassembly of the E2F1 transcription factor from RB1 by direct competition for the same binding site on RB1, with subsequent transcriptional activation of E2F1-regulated S-phase genes and of the E2 region of the adenoviral genome. Release of E2F1 leads to the ARF-mediated inhibition of MDM2 and causes TP53/p53 to accumulate because it is not targeted for degradation by MDM2-mediated ubiquitination anymore. This increase in TP53, in turn, would arrest the cell proliferation and direct its death but this effect is counteracted by the viral protein E1B-55K. Inactivation of the ability of RB1 to arrest the cell cycle is critical for cellular transformation, uncontrolled cellular growth and proliferation induced by viral infection. Interaction with RBX1 and CUL1 inhibits ubiquitination of the proteins targeted by SCF(FBXW7) ubiquitin ligase complex, and may be linked to unregulated host cell proliferation. The tumorigenesis-restraining activity of E1A may be related to the disruption of the host CtBP-CtIP complex through the CtBP binding motif. This is Early E1A protein from Canine adenovirus serotype 2 (strain Toronto A 26-61) (CAdV-2).